A 94-amino-acid chain; its full sequence is Defensin alpha 5 (94 aa).

The signal sequence occupies residues M1–A19. Intrachain disulfides connect C65-C93, C67-C82, and C72-C92.

The protein belongs to the alpha-defensin family. In terms of assembly, homodimer. Homotetramer. Interacts with B.antracis lef/lethal factor. Glycosylated. In terms of processing, proteolytically cleaved at Arg-62 by trypsin. Both the propeptide form proHD5/HD5(20-94) and HD5(56-94) are cleaved into the lumenal peptide form HD5(63-94) by trypsin. Unprocessed proHD5 exerts antimicrobial activities, but peptide potency is enhanced by peptide processing. Proteolytically cleaved in duodenal fluid; derived fragments are antimicrobially active against commensal bacteria (in vitro). Post-translationally, (Microbial infection) The disulfide bridges and homodimerization are a prerequisite for the enhancement of S.flexneri adhesion and invasion. Expressed in the gastrointestinal, reproductive, and urinary tracts (at protein level). Expressed in Paneth cells of the small intestine (at protein level). Expressed throughout the urothelium of the lower urinary tract and in the collecting tubules of the kidney (at protein level). Expressed in stratified squamous epithelial cells of the female genital tract epithelia, such as in vagina, ectocervix, endocervix, endometrium, and fallopian tube (at protein level). Endometrial expression correlates with stages of the menstrual cycle: Expression is low during the early proliferative phase, increased during the mid- to late proliferative phase, peaks during the early secretory phase of the cycle, and decreases during the mid- to late secretory phase.

Its subcellular location is the secreted. The protein localises to the cytoplasmic vesicle. It localises to the secretory vesicle. Functionally, host-defense peptide that maintains sterility in the urogenital system. Has antimicrobial activity against a wide range of bacteria, including Gram-negative E.coli, P.aeruginosa and S.typhimurium, and Gram-positive E.aerogenes, S.aureus, B.cereus, E.faecium and L.monocytogenes. Confers resistance to intestinal infection by S.typhimurium. Exhibits antimicrobial activity against enteric commensal bacteria such as B.adolescentis, L.acidophilus, B.breve, L.fermentum, B.longum and S.thermophilus. Binds to bacterial membranes and causes membrane disintegration. Induces the secretion of the chemokine IL-8 by intestinal epithelial cells. Binds to B.antracis lef/lethal factor, a major virulence factor from B.anthracis, and neutralizes its enzymatic activity. In terms of biological role, (Microbial infection) Acts as a target for S.flexneri infection by binding to the bacterium, possibly via bacterial surface proteins, and thereby augmenting infectivity via enhanced bacterial adhesion and invasion of epithelial cells and tissues. This chain is Defensin alpha 5 (DEFA5), found in Homo sapiens (Human).